A 475-amino-acid polypeptide reads, in one-letter code: Cytosolic enolase 3 (475 aa).

Position 2 is an N-acetylserine (Ser2). Residues His200 and Glu209 each contribute to the substrate site. The active-site Proton donor is Asp252. Residues Asp287, Glu336, and Asp361 each contribute to the Mg(2+) site. Residues Glu336 and Asp361 each contribute to the substrate site. Residue Lys386 is the Proton acceptor of the active site. Substrate is bound by residues 413-416 (SHRC) and Lys437.

The protein belongs to the enolase family. As to quaternary structure, homodimer. Mg(2+) is required as a cofactor.

The protein resides in the cytoplasm. The protein localises to the nucleus. The enzyme catalyses (2R)-2-phosphoglycerate = phosphoenolpyruvate + H2O. It participates in carbohydrate degradation; glycolysis; pyruvate from D-glyceraldehyde 3-phosphate: step 4/5. This Arabidopsis thaliana (Mouse-ear cress) protein is Cytosolic enolase 3 (ENO3).